The chain runs to 397 residues: Acetylornithine aminotransferase (397 aa).

Residue Phe129 coordinates pyridoxal 5'-phosphate. Residue Arg132 coordinates N(2)-acetyl-L-ornithine. Pyridoxal 5'-phosphate is bound at residue 214–217 (DEVQ). At Lys243 the chain carries N6-(pyridoxal phosphate)lysine. Ser271 is a binding site for N(2)-acetyl-L-ornithine. Thr272 lines the pyridoxal 5'-phosphate pocket.

Belongs to the class-III pyridoxal-phosphate-dependent aminotransferase family. ArgD subfamily. In terms of assembly, homodimer. Pyridoxal 5'-phosphate serves as cofactor.

The protein resides in the cytoplasm. The enzyme catalyses N(2)-acetyl-L-ornithine + 2-oxoglutarate = N-acetyl-L-glutamate 5-semialdehyde + L-glutamate. It participates in amino-acid biosynthesis; L-arginine biosynthesis; N(2)-acetyl-L-ornithine from L-glutamate: step 4/4. This is Acetylornithine aminotransferase from Neisseria meningitidis serogroup A / serotype 4A (strain DSM 15465 / Z2491).